The primary structure comprises 132 residues: MIKSWKPQELSISYHQFTVFQKDSTPPVMDWTDEAIEKGYAAADGAISFEAQRNTKAFILFRLNSSETVNSYEKKVTVPFHVTENGIHIESIMSKRLSFDLPKGDYQLTCWTVPAEMSDLHADTYIIDAVSV.

In terms of assembly, this protein is a subunit of a 75 kDa protein complex, which governs binding and entry of donor DNA. The complex is a tetramer of two subunits of the DNA-entry nuclease and two subunits of a competence-specific protein. Only the complex is able to bind ds- and ss-DNA.

It is found in the cell membrane. In terms of biological role, plays a role in the competence of cells to be transformed. It inhibits the activity of the DNA-entry nuclease. The chain is DNA-entry nuclease inhibitor (nin) from Bacillus subtilis (strain 168).